We begin with the raw amino-acid sequence, 568 residues long: Potassium-transporting ATPase potassium-binding subunit (568 aa).

Helical transmembrane passes span 7–27 (ITIG…GGFL), 65–85 (HYAL…YAIL), 136–156 (GLTV…AAII), 179–199 (LYVL…EGIP), 254–274 (LTNF…TNVF), 285–305 (WAVF…VYWA), 332–352 (FGVA…CGAV), 354–374 (AMHE…MMLG), 377–397 (IIGG…IAVF), 423–443 (MLAV…AVVV), 487–507 (ITLG…ALAI), and 530–550 (LFIG…FLPA).

Belongs to the KdpA family. The system is composed of three essential subunits: KdpA, KdpB and KdpC.

Its subcellular location is the cell inner membrane. Part of the high-affinity ATP-driven potassium transport (or Kdp) system, which catalyzes the hydrolysis of ATP coupled with the electrogenic transport of potassium into the cytoplasm. This subunit binds the periplasmic potassium ions and delivers the ions to the membrane domain of KdpB through an intramembrane tunnel. This Granulibacter bethesdensis (strain ATCC BAA-1260 / CGDNIH1) protein is Potassium-transporting ATPase potassium-binding subunit.